A 149-amino-acid polypeptide reads, in one-letter code: Calmodulin, striated muscle (149 aa).

EF-hand domains are found at residues 8–43, 44–79, 81–116, and 117–149; these read EQIAEFKEAFSLFDRDGDGCITTMELGTVMRSLGQN, PTEAELQDMVGEVDADGSGTIDFPEFLSLMARKMRD, DSEEEIREAFRVFDKDGNGYISAAELRHVMTNLGEK, and LTDEEVDEMIKEADCNNDGQVNYEEFVRMMTEK. Residues D21, D23, D25, C27, E32, D57, D59, S61, T63, E68, D94, D96, N98, Y100, and E105 each contribute to the Ca(2+) site. An N6,N6,N6-trimethyllysine modification is found at K116. D130, N132, D134, Q136, and E141 together coordinate Ca(2+).

This sequence belongs to the calmodulin family.

The chain is Calmodulin, striated muscle (CCM1) from Gallus gallus (Chicken).